A 179-amino-acid polypeptide reads, in one-letter code: Bifunctional protein PyrR (179 aa).

Residues 39–40, 101–109, Arg-134, and Val-158 contribute to the substrate site; these read RR and DDVLFTGRT. Positions 97 to 109 match the PRPP-binding motif; that stretch reads VILIDDVLFTGRT.

It belongs to the purine/pyrimidine phosphoribosyltransferase family. PyrR subfamily.

It carries out the reaction UMP + diphosphate = 5-phospho-alpha-D-ribose 1-diphosphate + uracil. Functionally, regulates the transcription of the pyrimidine nucleotide (pyr) operon in response to exogenous pyrimidines. Its function is as follows. Also displays a weak uracil phosphoribosyltransferase activity which is not physiologically significant. This chain is Bifunctional protein PyrR, found in Haemophilus ducreyi (strain 35000HP / ATCC 700724).